The chain runs to 418 residues: Tyrosine--tRNA ligase (418 aa).

L-tyrosine is bound at residue tyrosine 34. A 'HIGH' region motif is present at residues 39-48; sequence PTADSLHLGH. L-tyrosine is bound by residues tyrosine 169 and glutamine 173. Residues 229–233 carry the 'KMSKS' region motif; the sequence is KFGKS. Residue lysine 232 participates in ATP binding. Positions 352–418 constitute an S4 RNA-binding domain; it reads LNLVDMLVTA…GKKKYAVLTY (67 aa).

It belongs to the class-I aminoacyl-tRNA synthetase family. TyrS type 1 subfamily. In terms of assembly, homodimer.

Its subcellular location is the cytoplasm. It carries out the reaction tRNA(Tyr) + L-tyrosine + ATP = L-tyrosyl-tRNA(Tyr) + AMP + diphosphate + H(+). Catalyzes the attachment of tyrosine to tRNA(Tyr) in a two-step reaction: tyrosine is first activated by ATP to form Tyr-AMP and then transferred to the acceptor end of tRNA(Tyr). The protein is Tyrosine--tRNA ligase of Streptococcus pyogenes serotype M3 (strain SSI-1).